The chain runs to 498 residues: Glycerol kinase (498 aa).

An ADP-binding site is contributed by threonine 12. The ATP site is built by threonine 12, threonine 13, and serine 14. A sn-glycerol 3-phosphate-binding site is contributed by threonine 12. Arginine 16 provides a ligand contact to ADP. Sn-glycerol 3-phosphate contacts are provided by arginine 82, glutamate 83, tyrosine 134, and aspartate 243. 5 residues coordinate glycerol: arginine 82, glutamate 83, tyrosine 134, aspartate 243, and glutamine 244. Residues threonine 265 and glycine 308 each contribute to the ADP site. ATP is bound by residues threonine 265, glycine 308, glutamine 312, and glycine 409. The ADP site is built by glycine 409 and asparagine 413.

This sequence belongs to the FGGY kinase family. In terms of assembly, homotetramer and homodimer (in equilibrium).

It carries out the reaction glycerol + ATP = sn-glycerol 3-phosphate + ADP + H(+). It participates in polyol metabolism; glycerol degradation via glycerol kinase pathway; sn-glycerol 3-phosphate from glycerol: step 1/1. Its activity is regulated as follows. Activated by phosphorylation and inhibited by fructose 1,6-bisphosphate (FBP). Its function is as follows. Key enzyme in the regulation of glycerol uptake and metabolism. Catalyzes the phosphorylation of glycerol to yield sn-glycerol 3-phosphate. This is Glycerol kinase from Clostridium botulinum (strain Langeland / NCTC 10281 / Type F).